The sequence spans 317 residues: CXXC-type zinc finger protein 5 (317 aa).

Residues 1 to 10 (MSSLGGGSQD) are compositionally biased toward gly residues. Positions 1–92 (MSSLGGGSQD…SFGSSGGGGS (92 aa)) are disordered. Composition is skewed to low complexity over residues 11-27 (AGGS…SGSG) and 36-51 (STAV…VADD). The CXXC-type zinc-finger motif lies at 251-292 (GKKKRKRCGMCAPCRRRINCEQCSSCRNRKTGHQICKFRKCE). The Nuclear localization signal signature appears at 252–257 (KKKRKR). The Zn(2+) site is built by Cys258, Cys261, Cys264, Cys270, Cys273, Cys276, Cys286, and Cys291.

As to quaternary structure, interacts with DVL1. Interacts with RBPJ.

It is found in the nucleus. The protein resides in the cytoplasm. Its function is as follows. May indirectly participate in activation of the NF-kappa-B and MAPK pathways. Acts as a mediator of BMP4-mediated modulation of canonical Wnt signaling activity in neural stem cells. Required for DNA damage-induced ATM phosphorylation, p53 activation and cell cycle arrest. Involved in myelopoiesis. Binds to the oxygen responsive element of COX4I2 and represses its transcription under hypoxia conditions (4% oxygen), as well as normoxia conditions (20% oxygen). May repress COX4I2 transactivation induced by CHCHD2 and RBPJ. Binds preferentially to DNA containing cytidine-phosphate-guanosine (CpG) dinucleotides over CpH (H=A, T, and C), hemimethylated-CpG and hemimethylated-hydroxymethyl-CpG. This chain is CXXC-type zinc finger protein 5 (Cxxc5), found in Mus musculus (Mouse).